The following is a 329-amino-acid chain: Malate dehydrogenase (329 aa).

12–18 contributes to the NAD(+) binding site; it reads GAAGQIG. The substrate site is built by R95 and R101. Residues N108, Q115, and 132–134 contribute to the NAD(+) site; that span reads VGN. Residues N134 and R165 each coordinate substrate. The active-site Proton acceptor is the H190.

The protein belongs to the LDH/MDH superfamily. MDH type 2 family.

It catalyses the reaction (S)-malate + NAD(+) = oxaloacetate + NADH + H(+). Functionally, catalyzes the reversible oxidation of malate to oxaloacetate. The chain is Malate dehydrogenase from Bordetella petrii (strain ATCC BAA-461 / DSM 12804 / CCUG 43448).